Consider the following 356-residue polypeptide: Tyrosine recombinase XerS (356 aa).

The region spanning 16–121 is the Core-binding (CB) domain; that stretch reads VMPPYVLEYY…ALSSLYKYLT (106 aa). In terms of domain architecture, Tyr recombinase spans 169-354; sequence GFLDYIDSEY…INEEQKNALD (186 aa). Active-site residues include Arg210, Lys234, His306, Arg309, and His332. The O-(3'-phospho-DNA)-tyrosine intermediate role is filled by Tyr341.

The protein belongs to the 'phage' integrase family. XerS subfamily.

Its subcellular location is the cytoplasm. FtsK is required for recombination. In terms of biological role, site-specific tyrosine recombinase, which acts by catalyzing the cutting and rejoining of the recombining DNA molecules. Essential to convert dimers of the bacterial chromosome into monomers to permit their segregation at cell division. Binds an atypical recombination dif site (difSL). Binds preferentially to the left arm and cooperatively to the right arm of difSL. In Lactococcus lactis subsp. cremoris (strain MG1363), this protein is Tyrosine recombinase XerS.